The following is a 1408-amino-acid chain: MSNSMRDLISGEAELDDEEEDESFDERGGQRRHKNAVEDSSEEEEDDDDEEEARKVREGFIVDEDEDEDEGGESDADVRPLHKRKREHRDREEEAQLDEDDLDLIGEQFGERPKPTTQSKFKRLKRGTRDEDRGNQRRGLDDIFSDEEDDAGEQRAYNNRSSYRQADEFDDFIEEDFPDDPEELEQQREDAEVARPRDRVIGNIADTANLDKDALDDMEAIFGNGEDYDWALQMEEEEEDREREEQAIELKDVFEPSQLKEKLLTDEDNEIRFTDEPERFQIDRKTFKSLQLTAEQFKEEARWITNQLWPKKGLASDLQSPFGKAVGKVLEFFIVDEVEVPYVFQHRKDYLLHTRKTRNPNRDDPDAPEYVISADKLLNQDDLWKILELDIKFRSFVDKRNALEKTVDNLKGMEIHDAMVDEMIPEATTMEELQDLQDYLHFQYGQQLKDLAALAGNLSLTKRPGSKSNLLERVRQGKAYGFVRAYGISADQLAKNALRHGKKVTPDDDAQYPMDLADSLIDDVFSTGDQVISAARQMYSEELFASPRMRKHFRNSYYQAAEISCRRTEKGLRRIDDSHPYYEIKYLQNQAIADLVHQPELFLKMMKAEEEGLVTIKLDMPARYDFRQHLYQEFESENFSDRAEQWREERKKVLDLAYPKLEKIIAKNVKEVIRTFCQDEVLKMCREEYAKRLDQAPYKPKGMILGTTPRVLVLSNGMSDPARDPICWAWVEEDGRVIEQGKLGNLARDERQREEFEELVKRRRPDVIGVSGWSAETTKLVRDLEGLVNEKGLMGPEFEDPDTNDYRTEPLEVVVVNDEVARLYKDSPRALAEHPSLNPITRYCVALARYMQNPMKEYAALGKDVSSLSYHPCQNLLPADKLAKYLDSAMVDMVNLCGVDINEAMNDTYTANLLPYVSGLGPRKATSVIKAINANGGAVGTRDELVGDPDSGKLPVVGPRVWNNCASFLFIEYEATNPSSDPLDNTRVHPEDYELGRKMAADALELDEEDVKGETDENGPGAIVRKLFKMDEQDKVNELVLEEYAEQLERNYSQRKRATLETIRAELQAPYEELRRNFALLSASEIFTMFTGETKHTLCEGMIVPVNVRVVKDDFAIVKLDCGIEGRVEGHEVSHRSSIKEVLSSGQTSQAKILDINYKDFMAKLSMREDALRIPYKRPINLGRDGWDYVLEAADKEELREKDKTTGRTQRVVKHPNFKPFNGLQAEEYLGSQPNGEVVIRPSSKGNDHLAVTWKVADGVFQHIDVLEMQKETEFAVGKLLRVGGKYTYTDLDELIVEHVKAMARKVEELMRHDKYQNRSRGETEKWLTTYIDANPNRSTYAFCIDTKHPGYFWLCFKASRAAKVIALPVRAIPQGFELKGYQYPDMRALCNGFKLRYQNEFSKMGQR.

Residues 1–199 form a disordered region; the sequence is MSNSMRDLIS…DAEVARPRDR (199 aa). 4 stretches are compositionally biased toward acidic residues: residues 13–24, 39–51, 61–75, and 95–104; these read AELDDEEEDESF, DSSE…DDEE, IVDE…GESD, and AQLDEDDLDL. The span at 127–141 shows a compositional bias: basic and acidic residues; the sequence is GTRDEDRGNQRRGLD. A compositionally biased stretch (acidic residues) spans 168–184; the sequence is EFDDFIEEDFPDDPEEL. A compositionally biased stretch (basic and acidic residues) spans 185-199; the sequence is EQQREDAEVARPRDR. In terms of domain architecture, S1 motif spans 1101–1168; sequence GMIVPVNVRV…KDFMAKLSMR (68 aa). Residues 1213-1314 form the SH2 domain; that stretch reads VKHPNFKPFN…RKVEELMRHD (102 aa).

Belongs to the SPT6 family.

It localises to the nucleus. Its subcellular location is the chromosome. Histone H3-H4 chaperone that plays a role in maintenance of chromatin structure during RNA polymerase II transcription elongation thereby repressing transcription initiation from cryptic promoters. Mediates the reassembly of nucleosomes onto the promoters of at least a selected set of genes during repression; the nucleosome reassembly is essential for transcriptional repression. Essential for viability. The polypeptide is Transcription elongation factor SPT6 (SPT6) (Gibberella zeae (strain ATCC MYA-4620 / CBS 123657 / FGSC 9075 / NRRL 31084 / PH-1) (Wheat head blight fungus)).